The chain runs to 248 residues: 2,3-bisphosphoglycerate-dependent phosphoglycerate mutase (248 aa).

Substrate contacts are provided by residues 8 to 15 (RHGESQWN), 21 to 22 (TG), R60, 87 to 90 (ERHY), K98, 114 to 115 (RR), and 183 to 184 (GN). The active-site Tele-phosphohistidine intermediate is the H9. E87 serves as the catalytic Proton donor/acceptor.

This sequence belongs to the phosphoglycerate mutase family. BPG-dependent PGAM subfamily. As to quaternary structure, homodimer.

The catalysed reaction is (2R)-2-phosphoglycerate = (2R)-3-phosphoglycerate. The protein operates within carbohydrate degradation; glycolysis; pyruvate from D-glyceraldehyde 3-phosphate: step 3/5. In terms of biological role, catalyzes the interconversion of 2-phosphoglycerate and 3-phosphoglycerate. This Alteromonas mediterranea (strain DSM 17117 / CIP 110805 / LMG 28347 / Deep ecotype) protein is 2,3-bisphosphoglycerate-dependent phosphoglycerate mutase.